The sequence spans 81 residues: Small ribosomal subunit protein bS18 (81 aa).

It belongs to the bacterial ribosomal protein bS18 family. In terms of assembly, part of the 30S ribosomal subunit. Forms a tight heterodimer with protein bS6.

Binds as a heterodimer with protein bS6 to the central domain of the 16S rRNA, where it helps stabilize the platform of the 30S subunit. The sequence is that of Small ribosomal subunit protein bS18 from Chlamydia trachomatis serovar L2 (strain ATCC VR-902B / DSM 19102 / 434/Bu).